We begin with the raw amino-acid sequence, 110 residues long: UPF0060 membrane protein Bcep18194_A4425 (110 aa).

Helical transmembrane passes span 9-29 (ALFA…WLVL), 34-54 (PVWL…LLTL), 66-86 (YGGV…GVAL), and 88-108 (RWDV…ALQP).

It belongs to the UPF0060 family.

It is found in the cell inner membrane. The protein is UPF0060 membrane protein Bcep18194_A4425 of Burkholderia lata (strain ATCC 17760 / DSM 23089 / LMG 22485 / NCIMB 9086 / R18194 / 383).